We begin with the raw amino-acid sequence, 259 residues long: Indole-3-glycerol phosphate synthase (259 aa).

The protein belongs to the TrpC family.

The catalysed reaction is 1-(2-carboxyphenylamino)-1-deoxy-D-ribulose 5-phosphate + H(+) = (1S,2R)-1-C-(indol-3-yl)glycerol 3-phosphate + CO2 + H2O. Its pathway is amino-acid biosynthesis; L-tryptophan biosynthesis; L-tryptophan from chorismate: step 4/5. In Dehalococcoides mccartyi (strain ATCC BAA-2100 / JCM 16839 / KCTC 5957 / BAV1), this protein is Indole-3-glycerol phosphate synthase.